Here is a 184-residue protein sequence, read N- to C-terminus: Large ribosomal subunit protein uL5 (184 aa).

This sequence belongs to the universal ribosomal protein uL5 family. As to quaternary structure, part of the 50S ribosomal subunit; part of the 5S rRNA/L5/L18/L25 subcomplex. Contacts the 5S rRNA and the P site tRNA. Forms a bridge to the 30S subunit in the 70S ribosome.

In terms of biological role, this is one of the proteins that bind and probably mediate the attachment of the 5S RNA into the large ribosomal subunit, where it forms part of the central protuberance. In the 70S ribosome it contacts protein S13 of the 30S subunit (bridge B1b), connecting the 2 subunits; this bridge is implicated in subunit movement. Contacts the P site tRNA; the 5S rRNA and some of its associated proteins might help stabilize positioning of ribosome-bound tRNAs. This is Large ribosomal subunit protein uL5 from Thermotoga maritima (strain ATCC 43589 / DSM 3109 / JCM 10099 / NBRC 100826 / MSB8).